Reading from the N-terminus, the 128-residue chain is uncharacterized protein (128 aa).

An intrachain disulfide couples Cys10 to Cys13.

Belongs to the ArsC family.

This is an uncharacterized protein from Ureaplasma parvum serovar 3 (strain ATCC 700970).